The sequence spans 423 residues: Putative competence-damage inducible protein (423 aa).

The protein belongs to the CinA family.

In Streptococcus pyogenes serotype M6 (strain ATCC BAA-946 / MGAS10394), this protein is Putative competence-damage inducible protein.